Consider the following 1204-residue polypeptide: Probable cation-transporting ATPase 13A4 (1204 aa).

Residues 1–32 (MGENPAKSHYAQLNLGEENEMEIFGYKTQCCR) lie on the Cytoplasmic side of the membrane. A helical membrane pass occupies residues 33–53 (KALCIAGYILSCGALLLLFYW). Residues 54–219 (KPEWDVWANC…FSVCLWFAED (166 aa)) lie on the Extracellular side of the membrane. Residues 220 to 242 (YMEYAAAIIIMSPLSISLTVYDL) traverse the membrane as a helical segment. Topologically, residues 243–397 (RQQSVKLQRL…NFRLYRDALR (155 aa)) are cytoplasmic. Residues 398–418 (FLMCLIAFAAIGMIYTVCVFA) traverse the membrane as a helical segment. Residues 419-433 (LNGEEAGEVVKKALD) are Extracellular-facing. The chain crosses the membrane as a helical span at residues 434 to 454 (VITIAVPPALPAALTTGIIYT). At 455 to 897 (QRRLKKKGIF…REGRAALVTS (443 aa)) the chain is on the cytoplasmic side. Residue aspartate 483 is the 4-aspartylphosphate intermediate of the active site. Mg(2+) is bound by residues aspartate 845 and aspartate 849. A helical transmembrane segment spans residues 898 to 918 (FCMFKYMALYSTIQYLGVLLL). Residues 919-929 (YWQLNSFGNYQ) lie on the Extracellular side of the membrane. Residues 930–950 (FLFQDLAITTVIGMTMSFTEA) form a helical membrane-spanning segment. Residues 951 to 967 (YPKLVPYRPPSQLVSPP) lie on the Cytoplasmic side of the membrane. The chain crosses the membrane as a helical span at residues 968 to 988 (LLLSVILNILFSLGMQILGFL). The Extracellular segment spans residues 989-1043 (MVQKQPWYSKTDIHSACLSVNNHVENSSSASSLGLHGVGGGDPTEVDNGYKSYEN). A helical transmembrane segment spans residues 1044-1064 (TTVWLLSTINCLIIALVFSKG). Over 1065-1075 (KPFRQPIYTNY) the chain is Cytoplasmic. A helical membrane pass occupies residues 1076-1096 (VFIMVLVGQLGVCLFLVFADI). The Extracellular segment spans residues 1097 to 1113 (DDLYSKMDLVCTPTTWR). Residues 1114 to 1134 (ISMVMMLAVTLAVSFLVEEAI) form a helical membrane-spanning segment. Residues 1135 to 1204 (IENRALWLWL…PTFDSNEDAL (70 aa)) are Cytoplasmic-facing.

Belongs to the cation transport ATPase (P-type) (TC 3.A.3) family. Type V subfamily.

It is found in the membrane. It catalyses the reaction ATP + H2O = ADP + phosphate + H(+). In Gallus gallus (Chicken), this protein is Probable cation-transporting ATPase 13A4 (ATP13A4).